A 647-amino-acid chain; its full sequence is DNA mismatch repair protein MutL (647 aa).

This sequence belongs to the DNA mismatch repair MutL/HexB family.

This protein is involved in the repair of mismatches in DNA. It is required for dam-dependent methyl-directed DNA mismatch repair. May act as a 'molecular matchmaker', a protein that promotes the formation of a stable complex between two or more DNA-binding proteins in an ATP-dependent manner without itself being part of a final effector complex. The chain is DNA mismatch repair protein MutL from Bacillus thuringiensis (strain Al Hakam).